A 98-amino-acid polypeptide reads, in one-letter code: DNA-binding protein Fis (98 aa).

A DNA-binding region (H-T-H motif) is located at residues 74 to 93 (QTRAATMLGINRGTLRKKLK).

Belongs to the transcriptional regulatory Fis family. As to quaternary structure, homodimer.

Functionally, activates ribosomal RNA transcription. Plays a direct role in upstream activation of rRNA promoters. This is DNA-binding protein Fis from Glaesserella parasuis serovar 5 (strain SH0165) (Haemophilus parasuis).